A 352-amino-acid chain; its full sequence is NAD(+)-dependent homoserine dehydrogenase (352 aa).

This sequence belongs to the homoserine dehydrogenase family.

The enzyme catalyses L-homoserine + NAD(+) = L-aspartate 4-semialdehyde + NADH + H(+). Dehydrogenase involved in the degradation of canavanine, the delta-oxa-analog of arginine, allowing growth on canavanine as sole nitrogen and carbon source. Catalyzes the conversion of homoserine and NAD(+) to aspartate-semialdehyde and NADH. Is highly specific for NAD(+) and cannot use NADP(+). The polypeptide is NAD(+)-dependent homoserine dehydrogenase (Pseudomonas canavaninivorans).